Consider the following 350-residue polypeptide: Phenylalanine--tRNA ligase alpha subunit (350 aa).

Glu-257 provides a ligand contact to Mg(2+).

Belongs to the class-II aminoacyl-tRNA synthetase family. Phe-tRNA synthetase alpha subunit type 1 subfamily. As to quaternary structure, tetramer of two alpha and two beta subunits. The cofactor is Mg(2+).

It localises to the cytoplasm. The enzyme catalyses tRNA(Phe) + L-phenylalanine + ATP = L-phenylalanyl-tRNA(Phe) + AMP + diphosphate + H(+). The polypeptide is Phenylalanine--tRNA ligase alpha subunit (Listeria monocytogenes serotype 4b (strain CLIP80459)).